A 4008-amino-acid polypeptide reads, in one-letter code: Extracellular matrix organizing protein FRAS1 (4008 aa).

The signal sequence occupies residues 1-26; sequence MGVLKVWLGLALALAEFAVLPHHSEG. VWFC domains follow at residues 27-88, 93-153, 157-217, 219-279, and 283-343; these read ACVY…PECV, GSCH…PVCV, KPCS…PQCS, RSCS…EECV, and GSCS…PECI. Over 27–3901 the chain is Extracellular; sequence ACVYQDSLLA…AASLSQTGAS (3875 aa). A Phosphoserine modification is found at S344. In terms of domain architecture, VWFC 6 spans 347-417; the sequence is GYCVYEETGE…VKGQCCPDCT (71 aa). Residue N361 is glycosylated (N-linked (GlcNAc...) asparagine). FU repeat units lie at residues 409-460, 462-505, 507-553, 555-599, 602-647, 649-705, 708-753, 755-800, 803-852, 854-900, 903-948, 952-997, 999-1042, and 1046-1089; these read KGQC…GFYQ, GSLC…GFYQ, RHSC…GFYN, QGTC…GYYA, TGRC…GFYS, HGVC…HFYL, TGIC…GYFH, EGSC…EQFL, VGYC…GYYA, RGAC…GHYL, NHVC…QYYL, TNTC…SFYQ, SGLC…GYFA, and KHKC…GFSV. N-linked (GlcNAc...) asparagine glycosylation is present at N728. N-linked (GlcNAc...) asparagine glycans are attached at residues N1093 and N1108. CSPG repeat units follow at residues 1102–1197, 1217–1308, 1329–1438, 1463–1559, 1595–1689, 1710–1810, and 1833–1936; these read TPSL…LKIS, APYV…LQAN, GLQL…FEVS, APKV…FSFA, PVFQ…ISVT, GPRL…FSVS, and PPVI…FYVS. N1504 carries N-linked (GlcNAc...) asparagine glycosylation. N-linked (GlcNAc...) asparagine glycosylation occurs at N1777. Residues N1948 and N1978 are each glycosylated (N-linked (GlcNAc...) asparagine). 5 CSPG repeats span residues 1957–2057, 2078–2177, 2199–2291, 2311–2404, and 2439–2536; these read EPPR…FSLT, TPHL…FDVV, PPVI…FTLS, SLPV…FTVS, and TPRI…FLVK. Calx-beta domains are found at residues 2543–2646, 2659–2770, 2784–2890, 2905–3007, and 3025–3129; these read VSDN…VELS, AKVI…IALA, AKVL…VFLS, IAIN…VYLG, and ATIT…LVLG. N-linked (GlcNAc...) asparagine glycans are attached at residues N2563, N2664, and N2682. N-linked (GlcNAc...) asparagine glycosylation is found at N2908, N2985, N3070, N3218, N3676, and N3875. Residues 3902–3922 traverse the membrane as a helical segment; it reads IGSALAAIMLLLLVFLVACFI. Residues 3923 to 4008 lie on the Cytoplasmic side of the membrane; that stretch reads NRKCQKQRKK…HNNLQDGTEV (86 aa).

Belongs to the FRAS1 family. As to expression, expressed in many adult tissues, with highest levels in kidney, pancreas and thalamus. Relatively high expression was also detected in fetal kidney and heart.

It localises to the cell membrane. Involved in extracellular matrix organization. Required for the regulation of epidermal-basement membrane adhesion responsible for proper organogenesis during embryonic development. Involved in brain organization and function. This Homo sapiens (Human) protein is Extracellular matrix organizing protein FRAS1.